A 179-amino-acid polypeptide reads, in one-letter code: Large ribosomal subunit protein uL6 (179 aa).

This sequence belongs to the universal ribosomal protein uL6 family. In terms of assembly, part of the 50S ribosomal subunit.

This protein binds to the 23S rRNA, and is important in its secondary structure. It is located near the subunit interface in the base of the L7/L12 stalk, and near the tRNA binding site of the peptidyltransferase center. The sequence is that of Large ribosomal subunit protein uL6 from Bacillus velezensis (strain DSM 23117 / BGSC 10A6 / LMG 26770 / FZB42) (Bacillus amyloliquefaciens subsp. plantarum).